Reading from the N-terminus, the 371-residue chain is Queuine tRNA-ribosyltransferase (371 aa).

The active-site Proton acceptor is Asp-90. Residues 90-94 (DSGGF), Asp-144, Gln-189, and Gly-215 each bind substrate. An RNA binding region spans residues 246–252 (GVGTPEN). Residue Asp-265 is the Nucleophile of the active site. An RNA binding; important for wobble base 34 recognition region spans residues 270-274 (TRNAR). Residues Cys-303, Cys-305, Cys-308, and His-334 each coordinate Zn(2+).

This sequence belongs to the queuine tRNA-ribosyltransferase family. In terms of assembly, homodimer. Within each dimer, one monomer is responsible for RNA recognition and catalysis, while the other monomer binds to the replacement base PreQ1. Zn(2+) serves as cofactor.

The enzyme catalyses 7-aminomethyl-7-carbaguanine + guanosine(34) in tRNA = 7-aminomethyl-7-carbaguanosine(34) in tRNA + guanine. The protein operates within tRNA modification; tRNA-queuosine biosynthesis. Catalyzes the base-exchange of a guanine (G) residue with the queuine precursor 7-aminomethyl-7-deazaguanine (PreQ1) at position 34 (anticodon wobble position) in tRNAs with GU(N) anticodons (tRNA-Asp, -Asn, -His and -Tyr). Catalysis occurs through a double-displacement mechanism. The nucleophile active site attacks the C1' of nucleotide 34 to detach the guanine base from the RNA, forming a covalent enzyme-RNA intermediate. The proton acceptor active site deprotonates the incoming PreQ1, allowing a nucleophilic attack on the C1' of the ribose to form the product. After dissociation, two additional enzymatic reactions on the tRNA convert PreQ1 to queuine (Q), resulting in the hypermodified nucleoside queuosine (7-(((4,5-cis-dihydroxy-2-cyclopenten-1-yl)amino)methyl)-7-deazaguanosine). In Helicobacter pylori (strain P12), this protein is Queuine tRNA-ribosyltransferase.